The sequence spans 131 residues: Lymphocyte antigen 6C2 (131 aa).

The N-terminal stretch at 1–26 (MDSTHATKSCLLILLVALLCAGRAQG) is a signal peptide. Residues 27 to 116 (LQCYECYGVP…TAGSTWTMAG (90 aa)) enclose the UPAR/Ly6 domain. 5 cysteine pairs are disulfide-bonded: C29/C53, C32/C41, C46/C74, C78/C95, and C96/C101. A lipid anchor (GPI-anchor amidated glycine) is attached at G109. Positions 110–131 (STWTMAGVLLFSLSSVILQTLL) are cleaved as a propeptide — removed in mature form.

The protein localises to the cell membrane. In Mus musculus (Mouse), this protein is Lymphocyte antigen 6C2 (Ly6c2).